The sequence spans 370 residues: Phosphate acyltransferase (370 aa).

This sequence belongs to the PlsX family. In terms of assembly, homodimer. Probably interacts with PlsY.

The protein localises to the cytoplasm. It catalyses the reaction a fatty acyl-[ACP] + phosphate = an acyl phosphate + holo-[ACP]. It functions in the pathway lipid metabolism; phospholipid metabolism. Catalyzes the reversible formation of acyl-phosphate (acyl-PO(4)) from acyl-[acyl-carrier-protein] (acyl-ACP). This enzyme utilizes acyl-ACP as fatty acyl donor, but not acyl-CoA. This is Phosphate acyltransferase from Paracoccus denitrificans (strain Pd 1222).